The sequence spans 517 residues: Bifunctional purine biosynthesis protein PurH (517 aa).

The region spanning 1-145 (MSPLALVSVS…KNHADVAVLV (145 aa)) is the MGS-like domain.

Belongs to the PurH family.

The catalysed reaction is (6R)-10-formyltetrahydrofolate + 5-amino-1-(5-phospho-beta-D-ribosyl)imidazole-4-carboxamide = 5-formamido-1-(5-phospho-D-ribosyl)imidazole-4-carboxamide + (6S)-5,6,7,8-tetrahydrofolate. It carries out the reaction IMP + H2O = 5-formamido-1-(5-phospho-D-ribosyl)imidazole-4-carboxamide. It functions in the pathway purine metabolism; IMP biosynthesis via de novo pathway; 5-formamido-1-(5-phospho-D-ribosyl)imidazole-4-carboxamide from 5-amino-1-(5-phospho-D-ribosyl)imidazole-4-carboxamide (10-formyl THF route): step 1/1. The protein operates within purine metabolism; IMP biosynthesis via de novo pathway; IMP from 5-formamido-1-(5-phospho-D-ribosyl)imidazole-4-carboxamide: step 1/1. This chain is Bifunctional purine biosynthesis protein PurH, found in Prochlorococcus marinus (strain MIT 9515).